The following is a 530-amino-acid chain: Arginine-containing cyclodipeptide synthase pthA (530 aa).

The short motif at 419–423 (DDRAE) is the Conserved DDXXE motif element.

The protein belongs to the arginine-containing cyclodipeptide synthase family.

The enzyme catalyses L-aspartyl-tRNA(Asp) + L-arginyl-tRNA(Arg) = cyclo(L-arginyl-L-aspartyl) + tRNA(Asp) + tRNA(Arg) + 2 H(+). It functions in the pathway secondary metabolite biosynthesis. In terms of biological role, arginine-containing cyclodipeptide synthase; part of the cluster that mediates the biosynthesis of a highly modified cyclo-arginine-aspartate dipeptide (cRD). Within the pathway, pthA acts as the scaffold-generating enzyme and is responsible for formation of the cyclo-Arg-Asp diketopiperazine (cRW) from L-arginyl-tRNA(Arg) + L-aspartyl-tRNA(Asp). Additional enzymes from the cluster then further modify the cyclo-Arg-Asp diketopiperazine (cRW) scaffold. The polypeptide is Arginine-containing cyclodipeptide synthase pthA (Penicillium thymicola).